The following is a 504-amino-acid chain: Histidine ammonia-lyase (504 aa).

The 5-imidazolinone (Ala-Gly) cross-link spans 142 to 144 (ASG). 2,3-didehydroalanine (Ser) is present on Ser-143.

This sequence belongs to the PAL/histidase family. In terms of processing, contains an active site 4-methylidene-imidazol-5-one (MIO), which is formed autocatalytically by cyclization and dehydration of residues Ala-Ser-Gly.

It is found in the cytoplasm. It carries out the reaction L-histidine = trans-urocanate + NH4(+). It functions in the pathway amino-acid degradation; L-histidine degradation into L-glutamate; N-formimidoyl-L-glutamate from L-histidine: step 1/3. This Staphylococcus aureus (strain MRSA252) protein is Histidine ammonia-lyase.